The chain runs to 92 residues: Small ribosomal subunit protein bS18 (92 aa).

It belongs to the bacterial ribosomal protein bS18 family. As to quaternary structure, part of the 30S ribosomal subunit. Forms a tight heterodimer with protein bS6.

Binds as a heterodimer with protein bS6 to the central domain of the 16S rRNA, where it helps stabilize the platform of the 30S subunit. This is Small ribosomal subunit protein bS18 from Cupriavidus taiwanensis (strain DSM 17343 / BCRC 17206 / CCUG 44338 / CIP 107171 / LMG 19424 / R1) (Ralstonia taiwanensis (strain LMG 19424)).